The primary structure comprises 2446 residues: Transcription factor HIVEP2 (2446 aa).

Positions 1-93 are disordered; sequence MDTGDTALGQ…YPPHRPSPYS (93 aa). The span at 17 to 28 shows a compositional bias: basic and acidic residues; the sequence is GETDKASGRWRQ. 2 C2H2-type zinc fingers span residues 189 to 211 and 217 to 239; these read YICP…IRSH and YPCI…RKSH. Disordered stretches follow at residues 272–303, 340–416, 543–563, and 751–985; these read HSDG…PIPL, ESSQ…PPNT, SNSV…LRGS, and SHGH…SFER. 2 stretches are compositionally biased toward polar residues: residues 381-416 and 543-556; these read SEPS…PPNT and SNSV…NLTI. A compositionally biased stretch (basic and acidic residues) spans 751 to 760; it reads SHGHTERFDP. Polar residues predominate over residues 766–777; that stretch reads QPGSPSLVSEES. Residues 782–791 show a composition bias toward basic and acidic residues; it reads DSDKMSDLGG. The segment covering 800-812 has biased composition (polar residues); the sequence is SVIQHTNSLSRPN. Ser-819 carries the post-translational modification Phosphoserine. A compositionally biased stretch (low complexity) spans 863–878; sequence PSPSQQVQQQSYHTQP. The segment covering 892–916 has biased composition (basic and acidic residues); it reads RVTEEPDKPEKEKEAQSKEPEKPVE. The Nuclear localization signal motif lies at 937–943; that stretch reads PKKKRLR. Phosphoserine is present on residues Ser-950, Ser-955, Ser-1048, Ser-1443, and Ser-1447. Low complexity predominate over residues 952 to 982; that stretch reads GESSFESTGTGLSRSPSQESNLSHSSSFSMS. Residues 1485 to 1603 form a disordered region; sequence KDLSRPQKPQ…LEEEGKGHKR (119 aa). 2 stretches are compositionally biased toward low complexity: residues 1510–1533 and 1576–1586; these read SGSS…SPSS and SDMSMSPQSSS. C2H2-type zinc fingers lie at residues 1799 to 1821 and 1827 to 1851; these read YICE…IRTH and YVCK…SKAH. 2 disordered regions span residues 1882 to 1951 and 2024 to 2129; these read AAEK…VNVG and EECM…RRDL. The segment covering 1899 to 1925 has biased composition (acidic residues); the sequence is DAEESDGEDGDDNDDDDEDEDDFDDQG. Over residues 2029 to 2053 the composition is skewed to low complexity; the sequence is PSEPSSSPRDFSPSSHHSSPGYDSS. A run of 10 repeats spans residues 2053-2056, 2059-2062, 2071-2074, 2083-2086, 2089-2092, 2106-2109, 2112-2115, 2118-2121, 2130-2133, and 2145-2148. Residues 2053 to 2148 are 10 X 4 AA tandem repeats of S-P-[RGMKC]-[RK]; sequence SPCRDNSPKR…TTIRAPSPRR (96 aa). Residues 2078 to 2107 show a composition bias toward basic and acidic residues; the sequence is PRRDLSPMRHLSPRKEAALRREMSQRDVSP. Ser-2118 is subject to Phosphoserine. Disordered regions lie at residues 2242–2325, 2371–2403, and 2423–2446; these read PALS…QEEN, HFSR…SQTP, and HSSK…SQLH. Ser-2297 and Ser-2301 each carry phosphoserine. Positions 2307–2317 are enriched in polar residues; the sequence is KQSTSEDSLNA. Over residues 2387–2396 the composition is skewed to basic and acidic residues; the sequence is PDLHDGEKDN. Phosphoserine is present on residues Ser-2429 and Ser-2431. Over residues 2433–2446 the composition is skewed to basic and acidic residues; the sequence is EESKDPSSEKSQLH.

Interacts with TCF4. Expressed in brain and skeletal muscle.

The protein localises to the nucleus. In terms of biological role, this protein specifically binds to the DNA sequence 5'-GGGACTTTCC-3' which is found in the enhancer elements of numerous viral promoters such as those of SV40, CMV, or HIV1. In addition, related sequences are found in the enhancer elements of a number of cellular promoters, including those of the class I MHC, interleukin-2 receptor, somatostatin receptor II, and interferon-beta genes. It may act in T-cell activation. The protein is Transcription factor HIVEP2 (HIVEP2) of Homo sapiens (Human).